The chain runs to 478 residues: Shikimate biosynthesis protein AroDE (478 aa).

The segment at M1–T208 is 3-dehydroquinate dehydratase. 3-dehydroquinate contacts are provided by residues S21, E29 to R31, and T55 to K57. H110 acts as the Proton donor/acceptor; for 3-dehydroquinate dehydratase activity in catalysis. K133 acts as the Schiff-base intermediate with substrate; for 3-dehydroquinate dehydratase activity in catalysis. 3-dehydroquinate-binding residues include R171 and Q196. Positions N209–A478 are shikimate 5-dehydrogenase. Residue S226–G228 participates in shikimate binding. K277 (proton acceptor; for shikimate dehydrogenase activity) is an active-site residue. Residues N298 and D313 each contribute to the shikimate site. NADP(+)-binding positions include G337–A341, N360–T362, and G435. Residue Q442 coordinates shikimate.

This sequence in the N-terminal section; belongs to the type-I 3-dehydroquinase family. The protein in the C-terminal section; belongs to the shikimate dehydrogenase family.

The catalysed reaction is 3-dehydroquinate = 3-dehydroshikimate + H2O. The enzyme catalyses shikimate + NADP(+) = 3-dehydroshikimate + NADPH + H(+). It functions in the pathway metabolic intermediate biosynthesis; chorismate biosynthesis; chorismate from D-erythrose 4-phosphate and phosphoenolpyruvate: step 3/7. Its pathway is metabolic intermediate biosynthesis; chorismate biosynthesis; chorismate from D-erythrose 4-phosphate and phosphoenolpyruvate: step 4/7. Functionally, bifunctional enzyme that catalyzes two sequential steps of the aromatic amino acids biosynthetic pathway. In the first reaction, the AroD domain catalyzes the cis-dehydration of 3-dehydroquinate (DHQ) and introduces the first double bond of the aromatic ring to yield 3-dehydroshikimate; in the second reaction, the AroE domain catalyzes the reversible NADPH linked reduction of 3-dehydroshikimate (DHSA) to yield shikimate (SA). The protein is Shikimate biosynthesis protein AroDE of Chlamydia muridarum (strain MoPn / Nigg).